Consider the following 107-residue polypeptide: Nucleoid-associated protein RF_1365 (107 aa).

Belongs to the YbaB/EbfC family. Homodimer.

The protein resides in the cytoplasm. The protein localises to the nucleoid. In terms of biological role, binds to DNA and alters its conformation. May be involved in regulation of gene expression, nucleoid organization and DNA protection. This chain is Nucleoid-associated protein RF_1365, found in Rickettsia felis (strain ATCC VR-1525 / URRWXCal2) (Rickettsia azadi).